The sequence spans 301 residues: Large ribosomal subunit protein uL4 (301 aa).

The large ribosomal subunit protein uL4 stretch occupies residues 1 to 223; the sequence is MNETKTIDVL…TQALSAQPEV (223 aa). Positions 49–105 are disordered; sequence QGTHATKTRGQVSGGGKKPWRQKGTGRARQGSTRAPQWVGGGTVHGPQPRSYAQRTP. Residues 224–301 form a unknown region; the sequence is PETNVADQHP…KSDSEKEDAK (78 aa).

This sequence belongs to the universal ribosomal protein uL4 family. Part of the 50S ribosomal subunit.

One of the primary rRNA binding proteins, this protein initially binds near the 5'-end of the 23S rRNA. It is important during the early stages of 50S assembly. It makes multiple contacts with different domains of the 23S rRNA in the assembled 50S subunit and ribosome. Functionally, forms part of the polypeptide exit tunnel. The protein is Large ribosomal subunit protein uL4 of Cutibacterium acnes (strain DSM 16379 / KPA171202) (Propionibacterium acnes).